Here is a 463-residue protein sequence, read N- to C-terminus: EPD1-interacting receptor-like cytoplasmic serine/threonine-protein kinase (463 aa).

The region spanning 91–383 (FSSANFLGKG…LTDIPIGPFV (293 aa)) is the Protein kinase domain. ATP is bound by residues 97–105 (LGKGGFGPV) and lysine 126. 2 positions are modified to phosphotyrosine: tyrosine 171 and tyrosine 173. The active-site Proton acceptor is aspartate 221.

This sequence belongs to the protein kinase superfamily. Ser/Thr protein kinase family. As to quaternary structure, interacts with the V.dahliae elicitor EPD1 (AC G2WWH6). Post-translationally, phosphorylated at Tyr-171 and Tyr-173 in the presence of pathogen-associated molecular patterns (PAMPs); this triggers the expression of pathogenesis-related genes.

Its subcellular location is the cell membrane. It carries out the reaction L-seryl-[protein] + ATP = O-phospho-L-seryl-[protein] + ADP + H(+). It catalyses the reaction L-threonyl-[protein] + ATP = O-phospho-L-threonyl-[protein] + ADP + H(+). Functionally, required for pathogen-associated molecular pattern (PAMP, e.g. chitin and flg22)-triggered immunity (PTI) involving reactive oxygen species (ROS) accumulation and triggering plant defense, including defense-related gene expression (e.g. PR1 and LOX). Ensures specific recognition of the EPD1 effector of Verticillium dahliae, resulting in a hypersensitive response known as effector-triggered immunity (ETI), characterized by the activation of programmed cell death to limit infection by the pathogen. Priming plants with the incompatible pathogen V.dahliae leads to an increased resistance to both the broad-host-range filamentous pathogen Botrytis cinerea and the semibiotrophic pathogen Phytophthora capsici, as a result of systemic acquired resistance (SAR). The protein is EPD1-interacting receptor-like cytoplasmic serine/threonine-protein kinase of Nicotiana benthamiana.